The primary structure comprises 133 residues: Transmembrane protein 60 (133 aa).

Transmembrane regions (helical) follow at residues 5 to 25 (LAQR…MLVL), 35 to 55 (WFLI…MLIV), 78 to 98 (AWYL…CAKL), and 110 to 130 (FIPL…NVFF).

It localises to the membrane. The sequence is that of Transmembrane protein 60 (Tmem60) from Mus musculus (Mouse).